Consider the following 607-residue polypeptide: WD repeat-containing protein 1-A (607 aa).

WD repeat units follow at residues 4–45, 48–87, 93–135, 138–176, 180–218, 224–263, 270–306, 311–351, 358–408, 432–474, 480–518, 523–561, and 566–604; these read ELKK…IRNI, PAIA…IWDT, LLKY…LWDT, SVGE…FLEG, KFKF…LYDG, VCSL…IWDV, TTFN…YLDK, RPLR…YWDA, TFTG…KMDV, LKDK…LYSI, KDEG…VFSV, SEKN…VWTL, and TRIK…QWTV.

It belongs to the WD repeat AIP1 family.

Its subcellular location is the cell membrane. The protein localises to the cytoplasm. The protein resides in the cytoskeleton. It localises to the nucleus. In terms of biological role, induces disassembly of actin filaments in conjunction with ADF/cofilin family proteins. Doesn't sever actin filaments alone, but caps the barbed ends of filaments severed by cofilin, which blocks annealing and depolymerization and allows more extensive severing by cofilin. In Xenopus laevis (African clawed frog), this protein is WD repeat-containing protein 1-A (wdr1-a).